We begin with the raw amino-acid sequence, 505 residues long: Probable Xaa-Pro aminopeptidase Pc16g13390 (505 aa).

The Mn(2+) site is built by Asp-287, Asp-298, Glu-436, and Glu-475.

It belongs to the peptidase M24B family. Mn(2+) is required as a cofactor.

The enzyme catalyses Release of any N-terminal amino acid, including proline, that is linked to proline, even from a dipeptide or tripeptide.. Its function is as follows. Catalyzes the removal of a penultimate prolyl residue from the N-termini of peptides. The polypeptide is Probable Xaa-Pro aminopeptidase Pc16g13390 (Penicillium rubens (strain ATCC 28089 / DSM 1075 / NRRL 1951 / Wisconsin 54-1255) (Penicillium chrysogenum)).